A 136-amino-acid chain; its full sequence is UPF0310 protein SMU_442 (136 aa).

Belongs to the UPF0310 family.

The polypeptide is UPF0310 protein SMU_442 (Streptococcus mutans serotype c (strain ATCC 700610 / UA159)).